The sequence spans 346 residues: Sensor protein kinase GraS (346 aa).

2 consecutive transmembrane segments (helical) span residues methionine 15–aspartate 35 and leucine 43–phenylalanine 63. The 207-residue stretch at glutamate 126–asparagine 332 folds into the Histidine kinase domain.

As to quaternary structure, interacts with GraX.

The protein resides in the cell membrane. The catalysed reaction is ATP + protein L-histidine = ADP + protein N-phospho-L-histidine.. Member of the two-component regulatory system GraR/GraS involved in resistance against cationic antimicrobial peptides (CAMPs). Functions as a sensor protein kinase which phosphorylates GraR through the auxiliary protein GraX. In turn, GraR up-regulates many genes such as adhesins, exoproteins, transporters, toxins, and proteins involved in cell wall synthesis. Down-regulates the expression of many genes involved in RNA and amino acid synthesis or glycolysis. The chain is Sensor protein kinase GraS (graS) from Staphylococcus aureus (strain bovine RF122 / ET3-1).